A 471-amino-acid polypeptide reads, in one-letter code: ATP synthase subunit beta 1 (471 aa).

Residue 157-164 (GGAGVGKT) participates in ATP binding.

It belongs to the ATPase alpha/beta chains family. As to quaternary structure, F-type ATPases have 2 components, CF(1) - the catalytic core - and CF(0) - the membrane proton channel. CF(1) has five subunits: alpha(3), beta(3), gamma(1), delta(1), epsilon(1). CF(0) has three main subunits: a(1), b(2) and c(9-12). The alpha and beta chains form an alternating ring which encloses part of the gamma chain. CF(1) is attached to CF(0) by a central stalk formed by the gamma and epsilon chains, while a peripheral stalk is formed by the delta and b chains.

It is found in the cell inner membrane. The catalysed reaction is ATP + H2O + 4 H(+)(in) = ADP + phosphate + 5 H(+)(out). Functionally, produces ATP from ADP in the presence of a proton gradient across the membrane. The catalytic sites are hosted primarily by the beta subunits. The polypeptide is ATP synthase subunit beta 1 (Pelobacter propionicus (strain DSM 2379 / NBRC 103807 / OttBd1)).